The chain runs to 116 residues: Large ribosomal subunit protein bL17 (116 aa).

The protein belongs to the bacterial ribosomal protein bL17 family. Part of the 50S ribosomal subunit. Contacts protein L32.

This is Large ribosomal subunit protein bL17 from Crocosphaera subtropica (strain ATCC 51142 / BH68) (Cyanothece sp. (strain ATCC 51142)).